The chain runs to 279 residues: 4-hydroxy-3-methylbut-2-enyl diphosphate reductase (279 aa).

A [4Fe-4S] cluster-binding site is contributed by cysteine 12. Residues histidine 40 and histidine 72 each coordinate (2E)-4-hydroxy-3-methylbut-2-enyl diphosphate. Dimethylallyl diphosphate is bound by residues histidine 40 and histidine 72. The isopentenyl diphosphate site is built by histidine 40 and histidine 72. Residue cysteine 94 participates in [4Fe-4S] cluster binding. (2E)-4-hydroxy-3-methylbut-2-enyl diphosphate is bound at residue histidine 122. Histidine 122 contacts dimethylallyl diphosphate. Isopentenyl diphosphate is bound at residue histidine 122. Glutamate 124 serves as the catalytic Proton donor. Threonine 161 contacts (2E)-4-hydroxy-3-methylbut-2-enyl diphosphate. Cysteine 189 is a [4Fe-4S] cluster binding site. Positions 217, 219, and 261 each coordinate (2E)-4-hydroxy-3-methylbut-2-enyl diphosphate. Residues serine 217, asparagine 219, and serine 261 each coordinate dimethylallyl diphosphate. Isopentenyl diphosphate contacts are provided by serine 217, asparagine 219, and serine 261.

It belongs to the IspH family. The cofactor is [4Fe-4S] cluster.

The enzyme catalyses isopentenyl diphosphate + 2 oxidized [2Fe-2S]-[ferredoxin] + H2O = (2E)-4-hydroxy-3-methylbut-2-enyl diphosphate + 2 reduced [2Fe-2S]-[ferredoxin] + 2 H(+). It catalyses the reaction dimethylallyl diphosphate + 2 oxidized [2Fe-2S]-[ferredoxin] + H2O = (2E)-4-hydroxy-3-methylbut-2-enyl diphosphate + 2 reduced [2Fe-2S]-[ferredoxin] + 2 H(+). It functions in the pathway isoprenoid biosynthesis; dimethylallyl diphosphate biosynthesis; dimethylallyl diphosphate from (2E)-4-hydroxy-3-methylbutenyl diphosphate: step 1/1. It participates in isoprenoid biosynthesis; isopentenyl diphosphate biosynthesis via DXP pathway; isopentenyl diphosphate from 1-deoxy-D-xylulose 5-phosphate: step 6/6. Its function is as follows. Catalyzes the conversion of 1-hydroxy-2-methyl-2-(E)-butenyl 4-diphosphate (HMBPP) into a mixture of isopentenyl diphosphate (IPP) and dimethylallyl diphosphate (DMAPP). Acts in the terminal step of the DOXP/MEP pathway for isoprenoid precursor biosynthesis. The protein is 4-hydroxy-3-methylbut-2-enyl diphosphate reductase of Syntrophotalea carbinolica (strain DSM 2380 / NBRC 103641 / GraBd1) (Pelobacter carbinolicus).